A 482-amino-acid chain; its full sequence is Variant surface glycoprotein ANTAT 1.1C (482 aa).

The signal sequence occupies residues 1–8; the sequence is LHPQQALA. 2 disulfide bridges follow: C24-C151 and C133-C188. N92 carries N-linked (GlcNAc...) asparagine glycosylation. 2 N-linked (GlcNAc...) asparagine glycosylation sites follow: N398 and N411. D459 is lipidated: GPI-anchor amidated aspartate. Residues 460–482 constitute a propeptide, removed in mature form; that stretch reads SSILVTKKFALSLVSAAFASLLF.

It is found in the cell membrane. Its function is as follows. VSG forms a coat on the surface of the parasite. The trypanosome evades the immune response of the host by expressing a series of antigenically distinct VSGs from an estimated 1000 VSG genes. This chain is Variant surface glycoprotein ANTAT 1.1C, found in Trypanosoma brucei brucei.